The primary structure comprises 208 residues: FMN-dependent NADH:quinone oxidoreductase (208 aa).

FMN contacts are provided by residues 17–19 (SNS), 99–102 (MWNL), and 143–146 (SRGG).

This sequence belongs to the azoreductase type 1 family. As to quaternary structure, homodimer. FMN is required as a cofactor.

The catalysed reaction is 2 a quinone + NADH + H(+) = 2 a 1,4-benzosemiquinone + NAD(+). It catalyses the reaction N,N-dimethyl-1,4-phenylenediamine + anthranilate + 2 NAD(+) = 2-(4-dimethylaminophenyl)diazenylbenzoate + 2 NADH + 2 H(+). Quinone reductase that provides resistance to thiol-specific stress caused by electrophilic quinones. In terms of biological role, also exhibits azoreductase activity. Catalyzes the reductive cleavage of the azo bond in aromatic azo compounds to the corresponding amines. The sequence is that of FMN-dependent NADH:quinone oxidoreductase from Staphylococcus aureus (strain Mu50 / ATCC 700699).